Reading from the N-terminus, the 293-residue chain is Phospholipid scramblase 2 (293 aa).

The tract at residues 1–39 is disordered; sequence MDKQNVQMNPPHPGTNLTGPPGHIGYPGPQAGYAVPPPG. The segment at 1–66 is proline-rich domain (PRD); the sequence is MDKQNVQMNP…GHPGAPTQVP (66 aa). Topologically, residues 1 to 270 are cytoplasmic; the sequence is MDKQNVQMNP…IQFPLDLDVK (270 aa). The residue at position 143 (Thr143) is a Phosphothreonine; by PKC. S-palmitoyl cysteine attachment occurs at residues Cys166, Cys167, Cys170, and Cys171. The helical transmembrane segment at 271–287 threads the bilayer; it reads MKAVMLGACFLIDFMFF. The Extracellular portion of the chain corresponds to 288-293; sequence EMTRGE.

The protein belongs to the phospholipid scramblase family. Ca(2+) serves as cofactor.

It localises to the membrane. The enzyme catalyses a 1,2-diacyl-sn-glycero-3-phosphocholine(in) = a 1,2-diacyl-sn-glycero-3-phosphocholine(out). Functionally, may catalyze calcium-induced ATP-independent rapid bidirectional and non-specific movement of phospholipids (lipid scrambling or lipid flip-flop) between the inner and outer leaflet of the plasma membrane. The sequence is that of Phospholipid scramblase 2 from Bos taurus (Bovine).